A 197-amino-acid chain; its full sequence is MDIEMIEVILLAIALAMDAFAVSIGLGAKSQKQSSAYVLRLAVYAALYFGIAQGVMPLIGYLLGAVLLGWLATAAPWLGGGILILLGAKMLYEAFNGEIEAVLEDSFDRNMQEKINHRMMFTLAIATSIDAMAAGFTLNLLALNAWLACSIIAIVTAGFGFFGIYLGKSSGTWLEDKAEILGGLVLIAIGIKVMFIR.

The next 6 membrane-spanning stretches (helical) occupy residues 8 to 28 (VILL…GLGA), 43 to 63 (VYAA…GYLL), 66 to 86 (VLLG…LILL), 123 to 143 (LAIA…LLAL), 146 to 166 (WLAC…GIYL), and 176 to 196 (DKAE…VMFI).

The protein belongs to the MntP (TC 9.B.29) family.

Its subcellular location is the cell inner membrane. In terms of biological role, probably functions as a manganese efflux pump. This chain is Putative manganese efflux pump MntP 1, found in Psychrobacter cryohalolentis (strain ATCC BAA-1226 / DSM 17306 / VKM B-2378 / K5).